Reading from the N-terminus, the 157-residue chain is Thioredoxin 2 (157 aa).

The N-terminal stretch at 1-23 (MKKYIFFFLFSFINFFFVYDVTC) is a signal peptide. Residues 46 to 157 (LRMFKKVPRL…DLIALIKKHL (112 aa)) form the Thioredoxin domain. Residues Cys82 and Cys85 each act as nucleophile in the active site. Cys82 and Cys85 form a disulfide bridge.

Belongs to the thioredoxin family. As to quaternary structure, monomer. Component of the Plasmodium translocon of exported proteins (PTEX) complex composed of HSP101, EXP2, PTEX150, PTEX88 and TRX2. In terms of processing, the disulfide bond between Cys-82 and Cys-85 acts as a redox-active center and is reduced by thioredoxin reductase TRXR.

It is found in the parasitophorous vacuole membrane. In terms of biological role, participates in various redox reactions through the reversible oxidation of its active center dithiol to a disulfide and catalyzes dithiol-disulfide exchange reactions. As part of the translocon PTEX complex, plays a role in the export of parasite proteins into the host erythrocyte. The translocon PTEX complex is a multi-protein machinery resident in the parasite parasitophorous vacuolar membrane, responsible for protein secretion into host cells. May contribute to the unfolding of proteins containing the PEXEL localization motif before their passage through the translocon or regulate the PTEX complex function. This Plasmodium falciparum (isolate 3D7) protein is Thioredoxin 2.